The following is a 390-amino-acid chain: Probable inactive secreted aspartyl protease (390 aa).

Positions 1–20 (MQLTIKALVGILTTISAATA) are cleaved as a signal peptide. Positions 21-69 (VSFDMENLGAEKRGVSGEELHMLHGNEVLARFANGVYPEVANGTRVSKR) are cleaved as a propeptide — removed in mature form. Asparagine 62 is a glycosylation site (N-linked (GlcNAc...) asparagine). Positions 86–388 (WAVKAKIGSN…KFDSNEMQIA (303 aa)) constitute a Peptidase A1 domain. Residues aspartate 104 and aspartate 273 contribute to the active site. Cysteine 313 and cysteine 346 form a disulfide bridge.

It belongs to the peptidase A1 family.

It localises to the secreted. In terms of biological role, probable inactive secreted aspartyl protease. May promote an inflammatory immune response in the host when the host skin barrier is breached. Has no detectable protease activity in vitro on fluorogenic substrates, a peptide library, or with the general protease substrate casein. The presence of the enzyme also does not affect the activity of the secreted aspartyl protease SAP1. The chain is Probable inactive secreted aspartyl protease from Malassezia globosa (strain ATCC MYA-4612 / CBS 7966) (Dandruff-associated fungus).